Consider the following 522-residue polypeptide: MSSTLTCYCPGDGSLLGEVKLFNKSDIDQSIILAEEAQKEWKSTSFAERRNFLKALKENIIRNQDKYAEIACKDTGKTLVDAAFGEILVTLEKINWTLANGEQSLRPTKRPNSLLTSYKGGYVKYEPLGVIAALVSWNYPLHNALGPIISALFAGNAIVVKGSELTAWSTHQYCEMVRSLLQSMGHSPELVQCITCLPDVADHLTSHSGIKHITFIGSQPIAKLVAASAAKQLTPLCLELGGKDPCILTDDHRLEEILSIVMRGVFQSAGQNCIGIERIIALDGVYDTIITKLYNRISTMRLGMYTQNDVDMGAMVSNNRFDHLESLIQDAVSKGARLVYGGHRFQHPKYPKGNYFLPTLLVDATNEMKIAQEECFAPIALVFRAKSPEHALEIANGTEFGLGASVFGRDKQLCQYFTDNLETGMVAVNDFGAFYLLQMPFGGCKKSGYGRFAGYEGLRGICNSKAIAYDRFSAIHTGIPPAVDYPIPDSQKAWQFVRGLMGTVYGAWISLVPNVYQLWRNS.

Glutamate 239 functions as the Proton acceptor in the catalytic mechanism. Catalysis depends on cysteine 273, which acts as the Nucleophile.

Belongs to the aldehyde dehydrogenase family.

The protein resides in the cytoplasm. It localises to the nucleus. The sequence is that of Putative aldehyde dehydrogenase-like protein C21C3 from Schizosaccharomyces pombe (strain 972 / ATCC 24843) (Fission yeast).